The sequence spans 457 residues: Multidrug resistance protein MdtK (457 aa).

12 helical membrane passes run 11-31 (LLALAIPVIIAQVAQTSMGFV), 53-73 (IWLPAILFGHGLLLALTPVIA), 93-113 (WLAGFVSILIMVVLWNAGYII), 127-147 (AVGYLRALLWGAPGYLFFQVA), 160-180 (GMVMGFIGLLVNIPVNYIFIY), 189-209 (GGVGCGVATAAVYWVMFFSMI), 243-263 (LPIALALFFEVTLFAVVALLV), 276-296 (IALNFSSLMFVLPMSLAAAVT), 314-334 (AARTGLGVGVCMAFCTALFTV), 357-377 (LMLLAAIYQLSDSIQVIGSGI), 387-407 (IFFITFTAYWVLGLPTGYILA), and 418-438 (PAGFWMGFIIGLTSAAILMML).

This sequence belongs to the multi antimicrobial extrusion (MATE) (TC 2.A.66.1) family. MdtK subfamily.

Its subcellular location is the cell inner membrane. Its function is as follows. Multidrug efflux pump that functions probably as a Na(+)/drug antiporter. This is Multidrug resistance protein MdtK from Enterobacter sp. (strain 638).